Reading from the N-terminus, the 457-residue chain is Polygalacturonase-2 (457 aa).

The first 24 residues, 1 to 24 (MVIQRNSILLLIIIFASSISTCRS), serve as a signal peptide directing secretion. Positions 25-71 (NVIDDNLFKQVYDNILEQEFAHDFQAYLSYLSKNIESNNNIDKVDKN) are excised as a propeptide. N-linked (GlcNAc...) asparagine glycosylation is found at N189 and N240. PbH1 repeat units lie at residues 228 to 255 (SCTNVVASNLMINASAKSPNTDGVHVSN) and 256 to 277 (TQYIQISDTIIGTGDDCISIVS). D270 functions as the Proton donor in the catalytic mechanism. Residue N286 is glycosylated (N-linked (GlcNAc...) asparagine). H293 is an active-site residue. 2 PbH1 repeats span residues 309 to 330 (VSNVTVNEAKIIGAENGVRIKT) and 338 to 359 (ASNIKFLNVEMQDVKYPIIIDQ). N-linked (GlcNAc...) asparagine glycosylation occurs at N311. Positions 445–457 (LEISEDEALLYNY) are excised as a propeptide.

This sequence belongs to the glycosyl hydrolase 28 family. In terms of assembly, monomer PG2 (isoenzymes PG2A and PG2B). Also forms heterodimers called polygalacturonase 1 (PG1) with the beta subunit GP1. N-glycosylated. PG2B isozyme has a greater degree of glycosylation than PG2A. In terms of tissue distribution, expressed only in ripening fruits (at protein level).

The protein resides in the secreted. It is found in the extracellular space. The protein localises to the apoplast. It localises to the cell wall. It catalyses the reaction (1,4-alpha-D-galacturonosyl)n+m + H2O = (1,4-alpha-D-galacturonosyl)n + (1,4-alpha-D-galacturonosyl)m.. In terms of biological role, catalytic subunit of the polygalacturonase isozyme 1 and 2 (PG1 and PG2). Acts in concert with the pectinesterase, in the ripening process. Is involved in cell wall metabolism, specifically in polyuronide degradation. The depolymerization and solubilization of cell wall polyuronides mediated by PG2 during ripening seems to be limited by the beta subunit GP1, probably by recruiting PG2 to form PG1. The protein is Polygalacturonase-2 (PG2) of Solanum lycopersicum (Tomato).